Reading from the N-terminus, the 836-residue chain is Protein PDC2 (836 aa).

The HTH CENPB-type domain occupies 64-139 (ELIRRRKRAN…VKKLNINITG (76 aa)). Over residues 626–640 (TTSTSVVSDSPSGTT) the composition is skewed to low complexity. A disordered region spans residues 626–732 (TTSTSVVSDS…NVQFGNGAGS (107 aa)). Residues 641–651 (QKYNNISTYPN) show a composition bias toward polar residues. The segment covering 677–698 (GQELQNPQGQQQQEQQQQQQHQ) has biased composition (low complexity). Over residues 699–711 (MSGYNFSPISNIE) the composition is skewed to polar residues.

In terms of biological role, essential for the synthesis of pyruvate decarboxylase. The protein is Protein PDC2 (PDC2) of Candida albicans (Yeast).